We begin with the raw amino-acid sequence, 373 residues long: tRNA-specific 2-thiouridylase MnmA (373 aa).

Residues 12–19 (GMSGGVDS) and methionine 38 each bind ATP. The tract at residues 98–100 (NPD) is interaction with target base in tRNA. Cysteine 103 (nucleophile) is an active-site residue. Cysteines 103 and 200 form a disulfide. Glycine 127 contacts ATP. Residues 150-152 (KDQ) are interaction with tRNA. The active-site Cysteine persulfide intermediate is the cysteine 200. An interaction with tRNA region spans residues 312–313 (RY).

Belongs to the MnmA/TRMU family.

It is found in the cytoplasm. The enzyme catalyses S-sulfanyl-L-cysteinyl-[protein] + uridine(34) in tRNA + AH2 + ATP = 2-thiouridine(34) in tRNA + L-cysteinyl-[protein] + A + AMP + diphosphate + H(+). Catalyzes the 2-thiolation of uridine at the wobble position (U34) of tRNA, leading to the formation of s(2)U34. The polypeptide is tRNA-specific 2-thiouridylase MnmA (Streptococcus pyogenes serotype M12 (strain MGAS2096)).